A 1374-amino-acid polypeptide reads, in one-letter code: Y' element ATP-dependent helicase YLL066C (1374 aa).

A disordered region spans residues 321-345 (AGEAASSDHDQKISRVTRKRPREPK). Residues 375-552 (EIYMADTPSV…LQRIGLTGLA (178 aa)) enclose the Helicase ATP-binding domain. 388–395 (APPGYGKT) provides a ligand contact to ATP. A DEAH box motif is present at residues 498–501 (DEFH). The 150-residue stretch at 609-758 (KLLLALFEIE…EFYGLESKKG (150 aa)) folds into the Helicase C-terminal domain. The segment covering 832–975 (ANASTNATTN…ATTTESTNAS (144 aa)) has biased composition (low complexity). Residues 832-999 (ANASTNATTN…RFHPVTDINK (168 aa)) form a disordered region. Residues 976 to 999 (AKEDANKDGNAEDNRFHPVTDINK) are compositionally biased toward basic and acidic residues.

This sequence belongs to the helicase family. Yeast subtelomeric Y' repeat subfamily.

In terms of biological role, catalyzes DNA unwinding and is involved in telomerase-independent telomere maintenance. In Saccharomyces cerevisiae (strain ATCC 204508 / S288c) (Baker's yeast), this protein is Y' element ATP-dependent helicase YLL066C.